Reading from the N-terminus, the 496-residue chain is Cytochrome P450 71B1 (496 aa).

Residue Cys436 participates in heme binding.

Belongs to the cytochrome P450 family. Requires heme as cofactor.

In Thlaspi arvense (Field penny-cress), this protein is Cytochrome P450 71B1 (CYP71B1).